The primary structure comprises 494 residues: Trigger factor (494 aa).

A PPIase FKBP-type domain is found at 169–254; that stretch reads GDRITMDYVG…VKEVAAPADV (86 aa). Residues 441–494 form a disordered region; that stretch reads LAEEEGEAKAETKKAAPKKKAAAKAEAADAGEGEEAAPKKKAAPKKKAADESAE.

This sequence belongs to the FKBP-type PPIase family. Tig subfamily.

Its subcellular location is the cytoplasm. The catalysed reaction is [protein]-peptidylproline (omega=180) = [protein]-peptidylproline (omega=0). Its function is as follows. Involved in protein export. Acts as a chaperone by maintaining the newly synthesized protein in an open conformation. Functions as a peptidyl-prolyl cis-trans isomerase. This Rhizobium johnstonii (strain DSM 114642 / LMG 32736 / 3841) (Rhizobium leguminosarum bv. viciae) protein is Trigger factor.